Here is a 1492-residue protein sequence, read N- to C-terminus: Condensin-2 complex subunit D3-L (1492 aa).

Residues 152–201 (WPRDPNASRKRKKDTLKSSQGDNRGGRKRPRPPRRDEQEMEDLSEEEQDE) form a disordered region. Acidic residues predominate over residues 189-201 (QEMEDLSEEEQDE). 3 HEAT repeats span residues 543–581 (SSDG…CHLI), 583–619 (CSSE…AQPH), and 621–659 (VLIQ…QSIT). 3 disordered regions span residues 1269-1345 (QLER…PRPR), 1359-1406 (RKAA…SLVG), and 1454-1492 (IMSP…KPSN). Positions 1277–1290 (NVQNPPSAESTGSP) are enriched in polar residues. A compositionally biased stretch (low complexity) spans 1377–1388 (PSTPSPARTTSS).

In terms of assembly, component of the condensin-2 complex, which contains the smc2 and smc4 heterodimer, and three non SMC subunits, ncapg2, ncaph2 and ncapd3 that probably regulate the complex.

It localises to the nucleus. In terms of biological role, regulatory subunit of the condensin-2 complex, a complex which establishes mitotic chromosome architecture and is involved in physical rigidity of the chromatid axis. The polypeptide is Condensin-2 complex subunit D3-L (Xenopus laevis (African clawed frog)).